The sequence spans 179 residues: M-phase-specific PLK1-interacting protein (179 aa).

A disordered region spans residues 1–135 (MQRQNFRPPT…RVREKRMSNE (135 aa)). R37 is subject to Asymmetric dimethylarginine. Phosphoserine occurs at positions 40 and 47. T51 is subject to Phosphothreonine. At R57 the chain carries Omega-N-methylarginine. 2 positions are modified to asymmetric dimethylarginine: R59 and R68. The span at 60-71 (PYGSSHSPRHGG) shows a compositional bias: low complexity. Position 72 is a phosphoserine (S72). Position 77 is an asymmetric dimethylarginine (R77). A compositionally biased stretch (low complexity) spans 79-109 (GSPSPGGYPGSYSRSPAGSQQQFGYSPGQQQ). S80, S82, S93, S104, and S115 each carry phosphoserine. Residues 110-122 (THPQGSPRTSTPF) show a composition bias toward polar residues. The residue at position 117 (R117) is an Omega-N-methylarginine. T120 carries the post-translational modification Phosphothreonine. A phosphoserine mark is found at S124 and S133.

In terms of assembly, interacts with PLK1; phosphorylation-dependent. Phosphorylated during mitosis in the cell cycle probably by CDK1. As to expression, expressed at highest levels in liver and kidney; intermediate expression in skeletal muscle, pancreas, heart and placenta; low expression in brain and lung. Expressed in epidermis and hair follicles.

The protein resides in the nucleus. The protein localises to the cytoplasm. Its subcellular location is the cytoskeleton. It localises to the microtubule organizing center. It is found in the centrosome. In terms of biological role, may play a role in maintenance of cell cycle integrity by regulating mitosis or cytokinesis. This chain is M-phase-specific PLK1-interacting protein (MPLKIP), found in Homo sapiens (Human).